A 390-amino-acid chain; its full sequence is Pepsin B (390 aa).

The N-terminal stretch at 1–16 (MKIQVLVLVCLHLSEG) is a signal peptide. A propeptide spans 17-59 (VERIILKKGKSIRQVMEERGVLETFLRNHPKVDPAAKYLFNND) (activation peptide). Positions 74–387 (YFGEISIGTP…DMAANRVGFA (314 aa)) constitute a Peptidase A1 domain. Asp-92 is an active-site residue. Disulfide bonds link Cys-105–Cys-110 and Cys-269–Cys-273. Residue Asp-278 is part of the active site. Cysteines 312 and 345 form a disulfide.

Belongs to the peptidase A1 family.

It is found in the secreted. The enzyme catalyses Degradation of gelatin, little activity on hemoglobin. Specificity on B chain of insulin more restricted than that of pepsin A. Does not cleave 1-Phe-|-Val-2, 4-Gln-|-His-5 or 23-Gly-|-Phe-24.. Hydrolyzes various peptides including beta-endorphin, insulin B chain, dynorphin A, and neurokinin A, with high specificity for the cleavage of the Phe-Xaa bonds. The protein is Pepsin B (PGB) of Canis lupus familiaris (Dog).